A 591-amino-acid polypeptide reads, in one-letter code: Pyruvate kinase 2 (591 aa).

Substrate is bound at residue Arg-38. K(+) contacts are provided by Asn-40, Ser-42, and Asp-72. 40–43 (NFSH) is a binding site for ATP. ATP-binding residues include Arg-79 and Lys-164. Glu-229 is a Mg(2+) binding site. The substrate site is built by Gly-252, Asp-253, and Thr-285. Asp-253 is a binding site for Mg(2+).

Belongs to the pyruvate kinase family. This sequence in the C-terminal section; belongs to the PEP-utilizing enzyme family. As to quaternary structure, homotetramer. It depends on Mg(2+) as a cofactor. K(+) is required as a cofactor.

The catalysed reaction is pyruvate + ATP = phosphoenolpyruvate + ADP + H(+). Its pathway is carbohydrate degradation; glycolysis; pyruvate from D-glyceraldehyde 3-phosphate: step 5/5. In Synechocystis sp. (strain ATCC 27184 / PCC 6803 / Kazusa), this protein is Pyruvate kinase 2 (pyk2).